The sequence spans 112 residues: CENP-A recruiting complex protein mis19 (112 aa).

Component of the CENP-A recruiting complex composed of at least mis16, mis19, mis19 and mis20.

Its subcellular location is the chromosome. It is found in the centromere. It localises to the kinetochore. Functionally, component of the CENP-A recruiting complex that ensures the integrity of mitotic spindles through maintenance of kinetochore factors mis6/CENP-I and cnp1/CENP-A. Links mis16 and mis18 to recruit CENP-A through interacting with non-sense-mediated mRNA decay (NMD) factors and the SWI/SNF complex. Also links mis18 with the CCAN/mis6/ctf19 complex to promote CENP-A assembly. This Schizosaccharomyces pombe (strain 972 / ATCC 24843) (Fission yeast) protein is CENP-A recruiting complex protein mis19.